The sequence spans 288 residues: Cytochrome b-c1 complex catalytic subunit, mitochondrial (288 aa).

Residues 12–34 (SMVQKFIAGGVGVTGLTASYLLY) traverse the membrane as a helical segment. In terms of domain architecture, Cytochrome c spans 69–222 (ASIRRGFQVY…DLVEYEDGTP (154 aa)). Heme c contacts are provided by Cys82, Cys85, and His86. The segment covering 111–121 (EELEYDDEPDD) has biased composition (acidic residues). The disordered stretch occupies residues 111-138 (EELEYDDEPDDEGKPRKRPGKLADYIPG). The helical transmembrane segment at 250 to 268 (WGLKALVVLSSLYLLSIWV) threads the bilayer.

It belongs to the cytochrome c family. As to quaternary structure, component of the ubiquinol-cytochrome c oxidoreductase (cytochrome b-c1 complex, complex III, CIII), a multisubunit enzyme composed of 10 subunits. The complex is composed of 3 respiratory subunits cytochrome b (COB), cytochrome c1 (CYT1) and Rieske protein (RIP1), 2 core protein subunits COR1 and QCR2, and 5 low-molecular weight protein subunits QCR6, QCR7, QCR8, QCR9 and QCR10. The complex exists as an obligatory dimer and forms supercomplexes (SCs) in the inner mitochondrial membrane with a monomer or a dimer of cytochrome c oxidase (complex IV, CIV), resulting in 2 different assemblies (supercomplexes III(2)IV and III(2)IV(2)). The cofactor is heme c.

It localises to the mitochondrion inner membrane. It carries out the reaction a quinol + 2 Fe(III)-[cytochrome c](out) = a quinone + 2 Fe(II)-[cytochrome c](out) + 2 H(+)(out). Its function is as follows. Component of the ubiquinol-cytochrome c oxidoreductase, a multisubunit transmembrane complex that is part of the mitochondrial electron transport chain which drives oxidative phosphorylation. The complex plays an important role in the uptake of multiple carbon sources present in different host niches. The protein is Cytochrome b-c1 complex catalytic subunit, mitochondrial of Candida albicans (strain SC5314 / ATCC MYA-2876) (Yeast).